The chain runs to 100 residues: Aspartyl/glutamyl-tRNA(Asn/Gln) amidotransferase subunit C (100 aa).

The protein belongs to the GatC family. Heterotrimer of A, B and C subunits.

The enzyme catalyses L-glutamyl-tRNA(Gln) + L-glutamine + ATP + H2O = L-glutaminyl-tRNA(Gln) + L-glutamate + ADP + phosphate + H(+). It carries out the reaction L-aspartyl-tRNA(Asn) + L-glutamine + ATP + H2O = L-asparaginyl-tRNA(Asn) + L-glutamate + ADP + phosphate + 2 H(+). Allows the formation of correctly charged Asn-tRNA(Asn) or Gln-tRNA(Gln) through the transamidation of misacylated Asp-tRNA(Asn) or Glu-tRNA(Gln) in organisms which lack either or both of asparaginyl-tRNA or glutaminyl-tRNA synthetases. The reaction takes place in the presence of glutamine and ATP through an activated phospho-Asp-tRNA(Asn) or phospho-Glu-tRNA(Gln). The protein is Aspartyl/glutamyl-tRNA(Asn/Gln) amidotransferase subunit C of Streptococcus pneumoniae (strain Taiwan19F-14).